Here is a 1089-residue protein sequence, read N- to C-terminus: Carbamoyl phosphate synthase large chain (1089 aa).

The segment at 1-399 (MPKRTDIKSI…SIQKALCSLE (399 aa)) is carboxyphosphate synthetic domain. The ATP site is built by R127, R167, G173, G174, E206, L208, E213, G239, V240, H241, Q283, and E297. The ATP-grasp 1 domain maps to 131–326 (KECMKKIGMD…IAKVATLLAV (196 aa)). Q283, E297, and N299 together coordinate Mg(2+). Q283, E297, and N299 together coordinate Mn(2+). The tract at residues 400–553 (RSLSGFDRVK…NVSELTQSKN (154 aa)) is oligomerization domain. Residues 554–951 (DAKDKKEKKV…SYAKSQIASF (398 aa)) are carbamoyl phosphate synthetic domain. The ATP-grasp 2 domain occupies 680–871 (AEFITKLGIN…LAKVATRVMW (192 aa)). Residues R716, Q755, L757, E762, G787, I788, H789, S790, Q830, and E842 each coordinate ATP. Mg(2+) is bound by residues Q830, E842, and N844. Mn(2+)-binding residues include Q830, E842, and N844. The 138-residue stretch at 952 to 1089 (NHLPEQGVVF…VKSLQEWLKS (138 aa)) folds into the MGS-like domain. The allosteric domain stretch occupies residues 952 to 1089 (NHLPEQGVVF…VKSLQEWLKS (138 aa)).

Belongs to the CarB family. In terms of assembly, composed of two chains; the small (or glutamine) chain promotes the hydrolysis of glutamine to ammonia, which is used by the large (or ammonia) chain to synthesize carbamoyl phosphate. Tetramer of heterodimers (alpha,beta)4. Mg(2+) is required as a cofactor. Requires Mn(2+) as cofactor.

The enzyme catalyses hydrogencarbonate + L-glutamine + 2 ATP + H2O = carbamoyl phosphate + L-glutamate + 2 ADP + phosphate + 2 H(+). It carries out the reaction hydrogencarbonate + NH4(+) + 2 ATP = carbamoyl phosphate + 2 ADP + phosphate + 2 H(+). The protein operates within amino-acid biosynthesis; L-arginine biosynthesis; carbamoyl phosphate from bicarbonate: step 1/1. It functions in the pathway pyrimidine metabolism; UMP biosynthesis via de novo pathway; (S)-dihydroorotate from bicarbonate: step 1/3. In terms of biological role, large subunit of the glutamine-dependent carbamoyl phosphate synthetase (CPSase). CPSase catalyzes the formation of carbamoyl phosphate from the ammonia moiety of glutamine, carbonate, and phosphate donated by ATP, constituting the first step of 2 biosynthetic pathways, one leading to arginine and/or urea and the other to pyrimidine nucleotides. The large subunit (synthetase) binds the substrates ammonia (free or transferred from glutamine from the small subunit), hydrogencarbonate and ATP and carries out an ATP-coupled ligase reaction, activating hydrogencarbonate by forming carboxy phosphate which reacts with ammonia to form carbamoyl phosphate. The chain is Carbamoyl phosphate synthase large chain from Campylobacter jejuni subsp. jejuni serotype O:2 (strain ATCC 700819 / NCTC 11168).